The sequence spans 508 residues: Maturase K (508 aa).

Belongs to the intron maturase 2 family. MatK subfamily.

Its subcellular location is the plastid. The protein localises to the chloroplast. Usually encoded in the trnK tRNA gene intron. Probably assists in splicing its own and other chloroplast group II introns. The protein is Maturase K of Coronilla varia (Crown vetch).